A 440-amino-acid chain; its full sequence is Thymidine phosphorylase (440 aa).

It belongs to the thymidine/pyrimidine-nucleoside phosphorylase family. In terms of assembly, homodimer.

The enzyme catalyses thymidine + phosphate = 2-deoxy-alpha-D-ribose 1-phosphate + thymine. It functions in the pathway pyrimidine metabolism; dTMP biosynthesis via salvage pathway; dTMP from thymine: step 1/2. In terms of biological role, the enzymes which catalyze the reversible phosphorolysis of pyrimidine nucleosides are involved in the degradation of these compounds and in their utilization as carbon and energy sources, or in the rescue of pyrimidine bases for nucleotide synthesis. The protein is Thymidine phosphorylase of Shigella dysenteriae serotype 1 (strain Sd197).